Consider the following 201-residue polypeptide: Ribonuclease HII (201 aa).

Residues N14 to E201 enclose the RNase H type-2 domain. A divalent metal cation contacts are provided by D20, E21, and D112.

It belongs to the RNase HII family. Mn(2+) serves as cofactor. Mg(2+) is required as a cofactor.

It localises to the cytoplasm. It carries out the reaction Endonucleolytic cleavage to 5'-phosphomonoester.. Functionally, endonuclease that specifically degrades the RNA of RNA-DNA hybrids. The sequence is that of Ribonuclease HII from Photobacterium profundum (strain SS9).